The primary structure comprises 361 residues: S-adenosylmethionine:tRNA ribosyltransferase-isomerase (361 aa).

It belongs to the QueA family. Monomer.

Its subcellular location is the cytoplasm. The catalysed reaction is 7-aminomethyl-7-carbaguanosine(34) in tRNA + S-adenosyl-L-methionine = epoxyqueuosine(34) in tRNA + adenine + L-methionine + 2 H(+). It functions in the pathway tRNA modification; tRNA-queuosine biosynthesis. In terms of biological role, transfers and isomerizes the ribose moiety from AdoMet to the 7-aminomethyl group of 7-deazaguanine (preQ1-tRNA) to give epoxyqueuosine (oQ-tRNA). The polypeptide is S-adenosylmethionine:tRNA ribosyltransferase-isomerase (Haemophilus ducreyi (strain 35000HP / ATCC 700724)).